A 283-amino-acid polypeptide reads, in one-letter code: Para-Rep C7 (283 aa).

One can recognise a CRESS-DNA virus Rep endonuclease domain in the interval Ser3 to Trp96. An RCR-1 motif is present at residues Cys10–Leu13. The a divalent metal cation site is built by Glu36 and His42. Residues His42 to Gln44 carry the RCR-2 motif. A Nuclear localization signal motif is present at residues Lys51–Lys71. Catalysis depends on Tyr79, which acts as the For DNA cleavage activity. An RCR-3 motif is present at residues Tyr79 to Lys82. Glu84 is a binding site for a divalent metal cation. The short motif at Trp96–His102 is the Nuclear localization signal element. Residue Gly178 to Ser180 participates in ATP binding.

The protein belongs to the nanoviridea/circoviridae replication-associated protein family. Homooligomer (Potential). Rep binds to repeated DNA motifs (iterons). Mg(2+) is required as a cofactor. The cofactor is Mn(2+).

The protein resides in the host nucleus. It catalyses the reaction ATP + H2O = ADP + phosphate + H(+). Its function is as follows. Initiates and terminates the replication only of its own subviral DNA molecule. The closed circular ssDNA genome is first converted to a superhelical dsDNA. Rep binds a specific hairpin at the genome origin of replication. Introduces an endonucleolytic nick within the intergenic region of the genome, thereby initiating the rolling circle replication (RCR). Following cleavage, binds covalently to the 5'-phosphate of DNA as a tyrosyl ester. The cleavage gives rise to a free 3'-OH that serves as a primer for the cellular DNA polymerase. The polymerase synthesizes the (+) strand DNA by rolling circle mechanism. After one round of replication, a Rep-catalyzed nucleotidyl transfer reaction releases a circular single-stranded virus genome, thereby terminating the replication. Displays origin-specific DNA cleavage, nucleotidyl transferase, ATPase and helicase activities. This Faba bean necrotic yellows C7 alphasatellite (FBNYC7A) protein is Para-Rep C7 (C7).